We begin with the raw amino-acid sequence, 97 residues long: MNALSKAIMAETLCDELKLNKPVAKEMVENFFEELRHALENGQHVKLSGFGNFTLRDKPQRPGRNPKTGEEIPVEARRVVTFKPGLKLKTKIEKIGK.

Residues phenylalanine 50–glutamate 71 form a disordered region.

Belongs to the bacterial histone-like protein family. Heterodimer of an alpha and a beta chain.

In terms of biological role, this protein is one of the two subunits of integration host factor, a specific DNA-binding protein that functions in genetic recombination as well as in transcriptional and translational control. The protein is Integration host factor subunit alpha of Legionella pneumophila (strain Paris).